The chain runs to 388 residues: Lipid-A-disaccharide synthase (388 aa).

The protein belongs to the LpxB family.

It catalyses the reaction a lipid X + a UDP-2-N,3-O-bis[(3R)-3-hydroxyacyl]-alpha-D-glucosamine = a lipid A disaccharide + UDP + H(+). The protein operates within bacterial outer membrane biogenesis; LPS lipid A biosynthesis. Condensation of UDP-2,3-diacylglucosamine and 2,3-diacylglucosamine-1-phosphate to form lipid A disaccharide, a precursor of lipid A, a phosphorylated glycolipid that anchors the lipopolysaccharide to the outer membrane of the cell. This chain is Lipid-A-disaccharide synthase, found in Burkholderia pseudomallei (strain K96243).